A 549-amino-acid chain; its full sequence is Tegument protein (549 aa).

Disordered stretches follow at residues 50-92 (KKKA…TASP), 353-391 (ETGD…CSSY), and 523-542 (TPIK…TRSP). Polar residues-rich tracts occupy residues 75–84 (PQALSVPSLS) and 356–369 (DCSS…QTHR). The span at 523-534 (TPIKTTSSSSPR) shows a compositional bias: low complexity.

Functionally, this viral structural protein may have important functions, such as protein kinase activity, DNA binding, and possible transcriptional activation of immediate-early genes. The protein is Tegument protein of Homo sapiens (Human).